Here is a 394-residue protein sequence, read N- to C-terminus: Elongation factor Tu (394 aa).

Residues 10–205 (KPHMNVGTIG…TMDSYFDLPE (196 aa)) enclose the tr-type G domain. Positions 19-26 (GHVDHGKT) are G1. Residue 19-26 (GHVDHGKT) coordinates GTP. Residue threonine 26 coordinates Mg(2+). Residues 61–65 (GITIN) are G2. The G3 stretch occupies residues 82 to 85 (DCPG). GTP contacts are provided by residues 82–86 (DCPGH) and 137–140 (NKLD). Residues 137 to 140 (NKLD) are G4. The G5 stretch occupies residues 173–175 (SAF).

It belongs to the TRAFAC class translation factor GTPase superfamily. Classic translation factor GTPase family. EF-Tu/EF-1A subfamily. In terms of assembly, monomer.

Its subcellular location is the cytoplasm. The catalysed reaction is GTP + H2O = GDP + phosphate + H(+). Its function is as follows. GTP hydrolase that promotes the GTP-dependent binding of aminoacyl-tRNA to the A-site of ribosomes during protein biosynthesis. The protein is Elongation factor Tu of Borrelia hermsii (strain HS1 / DAH).